The primary structure comprises 407 residues: D-mannose isomerase (407 aa).

Active-site proton donor/acceptor residues include His-251 and His-383.

It belongs to the N-acylglucosamine 2-epimerase family. Homodimer.

The catalysed reaction is D-mannose = D-fructose. The enzyme catalyses D-lyxose = D-xylulose. Significantly inhibited by divalent metal ions such as Cu(2+), Cd(2+) or Ca(2+). In terms of biological role, catalyzes the reversible isomerization of D-mannose to D-fructose. Shows weaker activity on D-lyxose, but cannot use N-acetyl D-glucosamine. The polypeptide is D-mannose isomerase (Thermobifida fusca (Thermomonospora fusca)).